The following is a 190-amino-acid chain: Crossover junction endodeoxyribonuclease RuvC (190 aa).

Active-site residues include Asp8, Glu67, and Asp139. Mg(2+) is bound by residues Asp8, Glu67, and Asp139.

It belongs to the RuvC family. As to quaternary structure, homodimer which binds Holliday junction (HJ) DNA. The HJ becomes 2-fold symmetrical on binding to RuvC with unstacked arms; it has a different conformation from HJ DNA in complex with RuvA. In the full resolvosome a probable DNA-RuvA(4)-RuvB(12)-RuvC(2) complex forms which resolves the HJ. Requires Mg(2+) as cofactor.

The protein resides in the cytoplasm. It catalyses the reaction Endonucleolytic cleavage at a junction such as a reciprocal single-stranded crossover between two homologous DNA duplexes (Holliday junction).. Its function is as follows. The RuvA-RuvB-RuvC complex processes Holliday junction (HJ) DNA during genetic recombination and DNA repair. Endonuclease that resolves HJ intermediates. Cleaves cruciform DNA by making single-stranded nicks across the HJ at symmetrical positions within the homologous arms, yielding a 5'-phosphate and a 3'-hydroxyl group; requires a central core of homology in the junction. The consensus cleavage sequence is 5'-(A/T)TT(C/G)-3'. Cleavage occurs on the 3'-side of the TT dinucleotide at the point of strand exchange. HJ branch migration catalyzed by RuvA-RuvB allows RuvC to scan DNA until it finds its consensus sequence, where it cleaves and resolves the cruciform DNA. This is Crossover junction endodeoxyribonuclease RuvC from Haemophilus influenzae (strain PittEE).